The chain runs to 662 residues: Methionine--tRNA ligase (662 aa).

The short motif at 14–24 is the 'HIGH' region element; that stretch reads YYPSGKLHLGS. Residues 308–312 carry the 'KMSKS' region motif; the sequence is KMSKS. K311 contacts ATP. The 104-residue stretch at 559–662 folds into the tRNA-binding domain; that stretch reads DFEKIELKVA…DDVPAGSLIG (104 aa).

Belongs to the class-I aminoacyl-tRNA synthetase family. MetG type 2B subfamily. Homodimer.

Its subcellular location is the cytoplasm. It carries out the reaction tRNA(Met) + L-methionine + ATP = L-methionyl-tRNA(Met) + AMP + diphosphate. In terms of biological role, is required not only for elongation of protein synthesis but also for the initiation of all mRNA translation through initiator tRNA(fMet) aminoacylation. This is Methionine--tRNA ligase (metG) from Lactococcus lactis subsp. lactis (strain IL1403) (Streptococcus lactis).